The chain runs to 626 residues: Leucine aminopeptidase 2-1 (626 aa).

Residues 134–136 (QCQ) and 259–264 (PYGGME) each bind substrate. His288 is a binding site for Zn(2+). The active-site Proton acceptor is the Glu289. Residues His292 and Glu311 each coordinate Zn(2+). Catalysis depends on Tyr389, which acts as the Proton donor.

This sequence belongs to the peptidase M1 family. Zn(2+) serves as cofactor.

The protein resides in the cytoplasm. Its subcellular location is the nucleus. The enzyme catalyses an epoxide + H2O = an ethanediol. Functionally, aminopeptidase that preferentially cleaves di- and tripeptides. Also has low epoxide hydrolase activity (in vitro). Can hydrolyze the epoxide leukotriene LTA(4) but it forms preferentially 5,6-dihydroxy-7,9,11,14-eicosatetraenoic acid rather than the cytokine leukotriene B(4) as the product compared to the homologous mammalian enzyme (in vitro). In Scheffersomyces stipitis (strain ATCC 58785 / CBS 6054 / NBRC 10063 / NRRL Y-11545) (Yeast), this protein is Leucine aminopeptidase 2-1 (LKA4).